The following is a 277-amino-acid chain: Digeranylgeranylglyceryl phosphate synthase (277 aa).

8 helical membrane-spanning segments follow: residues 16-36 (LLAGIVGVLGSIVAAGGLPEL), 40-60 (ILVFLVVFLGCAGGNTINDYF), 83-105 (AALWYSVALFATGIVLAWFINIW), 107-124 (FLLAIVAYVTMFIYAWKL), 146-166 (GAIAVGEIGLAGTLALCAFLV), 202-222 (VGALFAILTVVASFLPIKAGI), 224-244 (LGYLAMLPVDAVILYSAFLIL), and 256-276 (QILLKVSVFLAVVAFLIASLV).

The protein belongs to the UbiA prenyltransferase family. DGGGP synthase subfamily. Mg(2+) serves as cofactor.

The protein localises to the cell membrane. It catalyses the reaction sn-3-O-(geranylgeranyl)glycerol 1-phosphate + (2E,6E,10E)-geranylgeranyl diphosphate = 2,3-bis-O-(geranylgeranyl)-sn-glycerol 1-phosphate + diphosphate. Its pathway is membrane lipid metabolism; glycerophospholipid metabolism. Prenyltransferase that catalyzes the transfer of the geranylgeranyl moiety of geranylgeranyl diphosphate (GGPP) to the C2 hydroxyl of (S)-3-O-geranylgeranylglyceryl phosphate (GGGP). This reaction is the second ether-bond-formation step in the biosynthesis of archaeal membrane lipids. The polypeptide is Digeranylgeranylglyceryl phosphate synthase (Thermococcus kodakarensis (strain ATCC BAA-918 / JCM 12380 / KOD1) (Pyrococcus kodakaraensis (strain KOD1))).